Consider the following 211-residue polypeptide: Thymidylate kinase (211 aa).

10–17 (GVEGCGKT) lines the ATP pocket.

Belongs to the thymidylate kinase family.

It carries out the reaction dTMP + ATP = dTDP + ADP. Its function is as follows. Phosphorylation of dTMP to form dTDP in both de novo and salvage pathways of dTTP synthesis. The chain is Thymidylate kinase from Nostoc sp. (strain PCC 7120 / SAG 25.82 / UTEX 2576).